Reading from the N-terminus, the 473-residue chain is MVKIGLEVHVHLTSLKTKLFCSCPSDYTGKDPNTNVCPICLGLPGAIPVLNENAVKAAIMVALAINAEIANSLIMVRKHYFYPDMAKNYQISQYDGPGSIAISKGGYLKLREGKTVRIRRINIEEDPAKIIYPTGSMLTSKYTLLDYNRSGMGLLEIVTEPDMTEPKEAREFLEKLRSILEHLGVCNCDLEGAMRADANVSVEGGERVEIKNIGSPREVEEALKYEIARQKAAIAQGLPVKRETRHWDSERKVTVPTRTKETEEDYRYFPDPDLPPYPITQDLIEEIRKTLPELPDLRIKRLVTQYGISDYDATVLVMDKALADLFEETAKHYSNYKKLVNLLINDYLRWLNDKNLRPSQSKAGSQHLVELLKLLDDGVITIKIAKEILPEIVLEGKMPSSIIKERGLVAIKDEDYLINVIKEVINEEPDAAEKAKNDPKVINYLVGKVMKKTGKRADPQLTNELIKKILGIK.

It belongs to the GatB/GatE family. GatB subfamily. Heterotrimer of A, B and C subunits.

The enzyme catalyses L-glutamyl-tRNA(Gln) + L-glutamine + ATP + H2O = L-glutaminyl-tRNA(Gln) + L-glutamate + ADP + phosphate + H(+). It catalyses the reaction L-aspartyl-tRNA(Asn) + L-glutamine + ATP + H2O = L-asparaginyl-tRNA(Asn) + L-glutamate + ADP + phosphate + 2 H(+). In terms of biological role, allows the formation of correctly charged Asn-tRNA(Asn) or Gln-tRNA(Gln) through the transamidation of misacylated Asp-tRNA(Asn) or Glu-tRNA(Gln) in organisms which lack either or both of asparaginyl-tRNA or glutaminyl-tRNA synthetases. The reaction takes place in the presence of glutamine and ATP through an activated phospho-Asp-tRNA(Asn) or phospho-Glu-tRNA(Gln). This is Aspartyl/glutamyl-tRNA(Asn/Gln) amidotransferase subunit B from Sulfurisphaera tokodaii (strain DSM 16993 / JCM 10545 / NBRC 100140 / 7) (Sulfolobus tokodaii).